The chain runs to 100 residues: Aspartyl/glutamyl-tRNA(Asn/Gln) amidotransferase subunit C (100 aa).

It belongs to the GatC family. Heterotrimer of A, B and C subunits.

The enzyme catalyses L-glutamyl-tRNA(Gln) + L-glutamine + ATP + H2O = L-glutaminyl-tRNA(Gln) + L-glutamate + ADP + phosphate + H(+). The catalysed reaction is L-aspartyl-tRNA(Asn) + L-glutamine + ATP + H2O = L-asparaginyl-tRNA(Asn) + L-glutamate + ADP + phosphate + 2 H(+). Its function is as follows. Allows the formation of correctly charged Asn-tRNA(Asn) or Gln-tRNA(Gln) through the transamidation of misacylated Asp-tRNA(Asn) or Glu-tRNA(Gln) in organisms which lack either or both of asparaginyl-tRNA or glutaminyl-tRNA synthetases. The reaction takes place in the presence of glutamine and ATP through an activated phospho-Asp-tRNA(Asn) or phospho-Glu-tRNA(Gln). This Rickettsia rickettsii (strain Sheila Smith) protein is Aspartyl/glutamyl-tRNA(Asn/Gln) amidotransferase subunit C.